The sequence spans 191 residues: Ribonuclease MC (191 aa).

Glutamine 9 lines the RNA pocket. Cysteine 15 and cysteine 23 form a disulfide bridge. RNA-binding positions include histidine 34, asparagine 72–valine 73, arginine 75, phenylalanine 81, histidine 84–glutamate 85, and lysine 88–histidine 89. The active-site Proton donor is the histidine 34. Intrachain disulfides connect cysteine 48–cysteine 92, cysteine 152–cysteine 185, and cysteine 169–cysteine 180. Glutamate 85 is an active-site residue. The Proton acceptor role is filled by histidine 89.

The protein belongs to the RNase T2 family.

The enzyme catalyses a ribonucleotidyl-ribonucleotide-RNA + H2O = a 3'-end 3'-phospho-ribonucleotide-RNA + a 5'-end dephospho-ribonucleoside-RNA + H(+). Its function is as follows. Ribonuclease cleaving preferentially the 5'-side of uridine. This is Ribonuclease MC from Momordica charantia (Bitter gourd).